A 210-amino-acid polypeptide reads, in one-letter code: Glutathione S-transferase P (210 aa).

A GST N-terminal domain is found at 2–81 (PPYTIVYFPV…HLGRSLGLYG (80 aa)). Y4 carries the phosphotyrosine; by EGFR modification. Residues Y8, R14, W39, K45, 52–53 (QL), and 65–66 (QS) each bind glutathione. The region spanning 83–204 (DQKEAALVDM…SSPDHVNRPI (122 aa)) is the GST C-terminal domain. N6-succinyllysine occurs at positions 103 and 116. The residue at position 128 (K128) is an N6-acetyllysine.

This sequence belongs to the GST superfamily. Pi family. In terms of assembly, homodimer. Interacts with CDK5.

The protein localises to the cytoplasm. The protein resides in the mitochondrion. It localises to the nucleus. It catalyses the reaction RX + glutathione = an S-substituted glutathione + a halide anion + H(+). The enzyme catalyses prostaglandin J2 + glutathione = prostaglandin J2-S-(R)-glutathione. The catalysed reaction is prostaglandin J2 + glutathione = prostaglandin J2-S-(S)-glutathione. It carries out the reaction prostaglandin A2 + glutathione = prostaglandin A2-S-(S)-glutathione. It catalyses the reaction 11(S)-hydroxy-14(S),15(S)-epoxy-(5Z,8Z,12E)-eicosatrienoate + glutathione = (11S,15S)-dihydroxy-14(R)-S-glutathionyl-(5Z,8Z,12E)-eicosatrienoate. In terms of biological role, conjugation of reduced glutathione to a wide number of exogenous and endogenous hydrophobic electrophiles. Involved in the formation of glutathione conjugates of both prostaglandin A2 (PGA2) and prostaglandin J2 (PGJ2). Participates in the formation of novel hepoxilin regioisomers. Negatively regulates CDK5 activity via p25/p35 translocation to prevent neurodegeneration. This Mesocricetus auratus (Golden hamster) protein is Glutathione S-transferase P (GSTP1).